The following is a 183-amino-acid chain: uncharacterized protein (183 aa).

A GGDEF domain is found at 55–183; the sequence is PRAAVLLVDL…RSRRGSRPAR (129 aa).

Its function is as follows. Might be involved in pSAM2 replication control. This is an uncharacterized protein from Streptomyces ambofaciens.